Here is a 316-residue protein sequence, read N- to C-terminus: MDCEWEGRPQRAGSRASQDPEGLPEARDDGLSESFLLLQMDVEYDPQEKRRPANSAAWSSKNVQRKQRHWERIVSSKKSKRKQERERRKIKRAEDLGNGTCPQHSKRFLKALTKEKLLEAKHSGPRLCVDLSMTQHMSKKELSRLAGQIRRLYGSNKKASRPFWIYLTGFSTDSPLYEECLRMNDGFSAYVLDVTEEDCFSLFPLETLVYLTPDSEHPLEDIDLSTVYIIGGLVDESIQKKVTFQKAQEYSVKTARLPIQEHMIRCQNEKNFHSEILAINQVFDILSAYLETRDWPEALKKGVSPGKGYILQNSVE.

2 disordered regions span residues Met1–Gly30 and Val42–Asn98. Residues Val63–Lys82 are compositionally biased toward basic residues. Residues Ser75–Leu96 adopt a coiled-coil conformation. The span at Gln83–Asp95 shows a compositional bias: basic and acidic residues. Residues Thr113–Ile310 enclose the SAM-dependent MTase TRM10-type domain.

This sequence belongs to the class IV-like SAM-binding methyltransferase superfamily. TRM10 family.

The enzyme catalyses guanosine(9) in tRNA + S-adenosyl-L-methionine = N(1)-methylguanosine(9) in tRNA + S-adenosyl-L-homocysteine + H(+). S-adenosyl-L-methionine-dependent guanine N(1)-methyltransferase that catalyzes the formation of N(1)-methylguanine at position 9 (m1G9) in tRNAs. Probably not able to catalyze formation of N(1)-methyladenine at position 9 (m1A9) in tRNAs. The chain is tRNA methyltransferase 10 homolog B (Trmt10b) from Rattus norvegicus (Rat).